We begin with the raw amino-acid sequence, 498 residues long: Histidine--tRNA ligase (498 aa).

It belongs to the class-II aminoacyl-tRNA synthetase family. In terms of assembly, homodimer.

It localises to the cytoplasm. It catalyses the reaction tRNA(His) + L-histidine + ATP = L-histidyl-tRNA(His) + AMP + diphosphate + H(+). The polypeptide is Histidine--tRNA ligase (Mycoplasmopsis synoviae (strain 53) (Mycoplasma synoviae)).